The sequence spans 292 residues: 4-hydroxy-tetrahydrodipicolinate synthase (292 aa).

Thr-50 serves as a coordination point for pyruvate. Tyr-139 acts as the Proton donor/acceptor in catalysis. Catalysis depends on Lys-167, which acts as the Schiff-base intermediate with substrate. Residue Ile-208 coordinates pyruvate.

This sequence belongs to the DapA family. In terms of assembly, homotetramer; dimer of dimers.

The protein resides in the cytoplasm. It catalyses the reaction L-aspartate 4-semialdehyde + pyruvate = (2S,4S)-4-hydroxy-2,3,4,5-tetrahydrodipicolinate + H2O + H(+). The protein operates within amino-acid biosynthesis; L-lysine biosynthesis via DAP pathway; (S)-tetrahydrodipicolinate from L-aspartate: step 3/4. Functionally, catalyzes the condensation of (S)-aspartate-beta-semialdehyde [(S)-ASA] and pyruvate to 4-hydroxy-tetrahydrodipicolinate (HTPA). The sequence is that of 4-hydroxy-tetrahydrodipicolinate synthase from Oenococcus oeni (strain ATCC BAA-331 / PSU-1).